Consider the following 579-residue polypeptide: Zinc finger protein 248 (579 aa).

The KRAB domain maps to 8-79; sequence VSFKDVCVDF…EKGFPSQCHP (72 aa). The C2H2-type 1; degenerate zinc-finger motif lies at 240-264; that stretch reads TVCKYNECGRTFIESLKLNISQRPH. K341 is covalently cross-linked (Glycyl lysine isopeptide (Lys-Gly) (interchain with G-Cter in SUMO2)). C2H2-type zinc fingers lie at residues 380–402, 408–430, 436–458, 464–486, 492–514, 520–543, and 548–570; these read FECG…QRTH, YECT…QRTH, YECK…QRTH, YECN…QRTH, FICN…QRTH, YKCN…RTHT, and YECN…QRIH.

Belongs to the krueppel C2H2-type zinc-finger protein family.

The protein localises to the nucleus. Its function is as follows. May be involved in transcriptional regulation. The chain is Zinc finger protein 248 (ZNF248) from Homo sapiens (Human).